Reading from the N-terminus, the 526-residue chain is GMP synthase [glutamine-hydrolyzing] (526 aa).

Residues 8–208 (CILIIDFGSQ…AVDICRCEVT (201 aa)) enclose the Glutamine amidotransferase type-1 domain. The active-site Nucleophile is the Cys-85. Active-site residues include His-182 and Glu-184. One can recognise a GMPS ATP-PPase domain in the interval 209 to 401 (WKPVYIVKNI…LGLPLNVVNQ (193 aa)). An ATP-binding site is contributed by 236 to 242 (SGGIDSL).

As to quaternary structure, homodimer.

The enzyme catalyses XMP + L-glutamine + ATP + H2O = GMP + L-glutamate + AMP + diphosphate + 2 H(+). It participates in purine metabolism; GMP biosynthesis; GMP from XMP (L-Gln route): step 1/1. Catalyzes the synthesis of GMP from XMP. This chain is GMP synthase [glutamine-hydrolyzing], found in Blochmanniella floridana.